The following is a 261-amino-acid chain: Receptor expression-enhancing protein 4 (261 aa).

Helical transmembrane passes span 1–21 (MVSW…YPAY) and 35–55 (YVRW…ETFT). The disordered stretch occupies residues 167–261 (YTDALYPDEP…KKPAQSEPEN (95 aa)). Positions 221–230 (KSLQRSQSLR) are enriched in polar residues.

This sequence belongs to the DP1 family. As to quaternary structure, interacts with microtubules. During gastrulation, expressed on the dorsal side of the embryo and then in the neural plate and neural tube. At tailbud stages, expressed in the somites, neural tube and otic vesicle.

It is found in the endoplasmic reticulum membrane. Its function is as follows. Microtubule-binding protein required to ensure proper cell division and nuclear envelope reassembly by sequestering the endoplasmic reticulum away from chromosomes during mitosis. Probably acts by clearing the endoplasmic reticulum membrane from metaphase chromosomes. May play a role in the maintenance of both the nervous system and the musculature. The chain is Receptor expression-enhancing protein 4 (reep4) from Xenopus laevis (African clawed frog).